A 568-amino-acid polypeptide reads, in one-letter code: Type 2 DNA topoisomerase 6 subunit B (568 aa).

ATP is bound by residues asparagine 46, aspartate 78, 99-100 (TK), 109-116 (GQQGIGIS), and lysine 473.

The protein belongs to the TOP6B family. Homodimer. Heterotetramer of two Top6A and two Top6B chains.

It catalyses the reaction ATP-dependent breakage, passage and rejoining of double-stranded DNA.. Relaxes both positive and negative superturns and exhibits a strong decatenase activity. The protein is Type 2 DNA topoisomerase 6 subunit B of Pyrococcus furiosus (strain ATCC 43587 / DSM 3638 / JCM 8422 / Vc1).